A 444-amino-acid chain; its full sequence is U-box domain-containing protein 31 (444 aa).

A U-box domain is found at 59-133 (EIPSVFICPI…YTWFSQKYVL (75 aa)). ARM repeat units lie at residues 301–340 (KQVRNLLVRIGAVPQLVDVLPCLDVECLESALFVLDSLCL) and 343–382 (EGRIALKDSVNTIPHTVRLLMKVSEKCTNYAISILWSVCK).

The catalysed reaction is S-ubiquitinyl-[E2 ubiquitin-conjugating enzyme]-L-cysteine + [acceptor protein]-L-lysine = [E2 ubiquitin-conjugating enzyme]-L-cysteine + N(6)-ubiquitinyl-[acceptor protein]-L-lysine.. Its pathway is protein modification; protein ubiquitination. Its function is as follows. Functions as an E3 ubiquitin ligase. The sequence is that of U-box domain-containing protein 31 (PUB31) from Arabidopsis thaliana (Mouse-ear cress).